The sequence spans 234 residues: Glucosamine-6-phosphate deaminase (234 aa).

D63 serves as the catalytic Proton acceptor; for enolization step. N129 acts as the For ring-opening step in catalysis. The active-site Proton acceptor; for ring-opening step is the H131. E136 (for ring-opening step) is an active-site residue.

This sequence belongs to the glucosamine/galactosamine-6-phosphate isomerase family. NagB subfamily.

The enzyme catalyses alpha-D-glucosamine 6-phosphate + H2O = beta-D-fructose 6-phosphate + NH4(+). Its pathway is amino-sugar metabolism; N-acetylneuraminate degradation; D-fructose 6-phosphate from N-acetylneuraminate: step 5/5. In terms of biological role, catalyzes the reversible isomerization-deamination of glucosamine 6-phosphate (GlcN6P) to form fructose 6-phosphate (Fru6P) and ammonium ion. The protein is Glucosamine-6-phosphate deaminase of Listeria monocytogenes serotype 4b (strain CLIP80459).